Reading from the N-terminus, the 98-residue chain is Integration host factor subunit alpha (98 aa).

The tract at residues 54–74 (LRDKASRPGRNPKTGENIPVS) is disordered.

It belongs to the bacterial histone-like protein family. In terms of assembly, heterodimer of an alpha and a beta chain.

Its function is as follows. This protein is one of the two subunits of integration host factor, a specific DNA-binding protein that functions in genetic recombination as well as in transcriptional and translational control. The chain is Integration host factor subunit alpha from Actinobacillus succinogenes (strain ATCC 55618 / DSM 22257 / CCUG 43843 / 130Z).